A 195-amino-acid polypeptide reads, in one-letter code: Pyridoxal 5'-phosphate synthase subunit PdxT (195 aa).

Position 46-48 (G46–S48) interacts with L-glutamine. C78 serves as the catalytic Nucleophile. L-glutamine-binding positions include R107 and I135 to R136. Residues H172 and E174 each act as charge relay system in the active site.

This sequence belongs to the glutaminase PdxT/SNO family. In terms of assembly, in the presence of PdxS, forms a dodecamer of heterodimers. Only shows activity in the heterodimer.

It catalyses the reaction aldehydo-D-ribose 5-phosphate + D-glyceraldehyde 3-phosphate + L-glutamine = pyridoxal 5'-phosphate + L-glutamate + phosphate + 3 H2O + H(+). It carries out the reaction L-glutamine + H2O = L-glutamate + NH4(+). It functions in the pathway cofactor biosynthesis; pyridoxal 5'-phosphate biosynthesis. Catalyzes the hydrolysis of glutamine to glutamate and ammonia as part of the biosynthesis of pyridoxal 5'-phosphate. The resulting ammonia molecule is channeled to the active site of PdxS. The polypeptide is Pyridoxal 5'-phosphate synthase subunit PdxT (Corynebacterium jeikeium (strain K411)).